A 370-amino-acid polypeptide reads, in one-letter code: Adaptive-response sensory kinase SasA (370 aa).

The region spanning 152-365 (MVAHELRTPL…CFYLTVPVWQ (214 aa)) is the Histidine kinase domain. At H155 the chain carries Phosphohistidine; by autocatalysis.

In terms of assembly, homooligomerizes. Interacts with KaiC. Participates in the KaiBC complex, whose core is composed of a KaiC homohexamer and 6 KaiB.

The enzyme catalyses ATP + protein L-histidine = ADP + protein N-phospho-L-histidine.. In terms of biological role, member of the two-component regulatory system SasA/RpaA involved in genome-wide circadian gene expression. One of several clock output pathways. Participates in the Kai clock protein complex, the main circadian regulator in cyanobacteria, via its interaction with KaiC. KaiC enhances the autophosphorylation activity of SasA, which then transfers its phosphate group to RpaA to activate it. In addition to its output function, recruits fold-shifted KaiB (KaiB(fs)) to KaiC to cooperatively form the KaiB(6):KaiC(6) complex (independent of SasA kinase activity). Required for robustness of the circadian rhythm of gene expression and is involved in clock output, also required for adaptation to light/dark cycles. This Prochlorococcus marinus (strain MIT 9303) protein is Adaptive-response sensory kinase SasA.